Reading from the N-terminus, the 855-residue chain is Beclin-1-like protein B (855 aa).

Disordered regions lie at residues 92 to 212 (FGKR…GSLS), 236 to 271 (LVADINNNNNSVNKDNNTTISSSTVTTSNSISESNN), 294 to 380 (ATIP…QKPR), and 407 to 475 (VDGG…QQQP). Composition is skewed to low complexity over residues 99–123 (TQSNSTTPTTPATPTATPTSSSLSL) and 131–143 (QQQQQQQQQQQQT). Residues 144–156 (FNDQSKLTATTPT) are compositionally biased toward polar residues. A compositionally biased stretch (low complexity) spans 177-200 (HSNNSSNGSDHGGNVNTTGVSPSS). The segment covering 294–348 (ATIPTTTTTSTPTTPSTVGGTTPSPPSSSSSSSSSSSVITSPISRISPSNITSPS) has biased composition (low complexity). Polar residues-rich tracts occupy residues 368 to 377 (LNISQVSSPQ) and 413 to 445 (SGTESTSMTNHHSSFLNQSTLPLGSSPVQTTPP). The span at 446 to 474 (LLSNSMNNSTNNLQSLQQQQQQQQQQQQQ) shows a compositional bias: low complexity. The stretch at 538-595 (EKGKTEEDLEELGKEMTLLCEEEEQLRLMIENTHQERKEVEQLTLQLQDRIATLKSLE) forms a coiled coil. Residues 826–855 (LNNNQNNNNINNNNNNNINNNNNNNVNKRN) are disordered.

Belongs to the beclin family.

Its subcellular location is the endosome membrane. Involved in autophagy. May be required to recruit the atg8-phosphatidylinositol conjugate and the atg12-atg5 conjugate to the pre-autophagosomal structure. This chain is Beclin-1-like protein B (atg6B), found in Dictyostelium discoideum (Social amoeba).